We begin with the raw amino-acid sequence, 194 residues long: Lymphocyte antigen 6 complex locus protein G5b (194 aa).

The signal sequence occupies residues 1–18 (MRACVLVHVLTMVGFALG). The region spanning 26 to 118 (RTCHLCFLED…SAQHQSTLPG (93 aa)) is the UPAR/Ly6 domain. Intrachain disulfides connect Cys-28-Cys-55, Cys-31-Cys-40, Cys-47-Cys-73, Cys-81-Cys-98, and Cys-99-Cys-104. The N-linked (GlcNAc...) asparagine glycan is linked to Asn-182.

In terms of processing, N-glycosylated.

It is found in the secreted. This Rattus norvegicus (Rat) protein is Lymphocyte antigen 6 complex locus protein G5b (Ly6g5b).